Reading from the N-terminus, the 348-residue chain is Killer cell immunoglobulin-like receptor 2DL1 (348 aa).

An N-terminal signal peptide occupies residues 1–21 (MSLLVVSMACVGFFLLQGAWP). At 22 to 245 (HEGVHRKPSL…SKTGNPRHLH (224 aa)) the chain is on the extracellular side. Ig-like C2-type domains are found at residues 42–107 (EETV…VTHS) and 142–205 (GENV…FHDS). Cysteines 49 and 100 form a disulfide. N-linked (GlcNAc...) asparagine glycans are attached at residues Asn67, Asn84, Asn144, and Asn178. A disulfide bridge connects residues Cys149 and Cys198. The interval 220–239 (VTGNPSNSWPSPTEPSSKTG) is disordered. Residues 246 to 264 (ILIGTSVVIILFILLFFLL) traverse the membrane as a helical segment. The Cytoplasmic portion of the chain corresponds to 265-348 (HRWCSNKKNA…ESRSKVVSCP (84 aa)).

It belongs to the immunoglobulin superfamily. In terms of assembly, interacts with ARRB2. Interacts with PTPN6; the interaction is enhanced by ARRB2. Interacts with PTPN11; the interaction is enhanced by ARRB2. In terms of tissue distribution, expressed by NK cells.

It is found in the cell membrane. In terms of biological role, receptor on natural killer (NK) cells for some HLA-C alleles such as w4 and w6. Inhibits the activity of NK cells thus preventing cell lysis. This is Killer cell immunoglobulin-like receptor 2DL1 from Homo sapiens (Human).